The following is a 316-amino-acid chain: Protein lifeguard 2 (316 aa).

The tract at residues 1–49 is disordered; that stretch reads MTQGKLSVANKAPGTEGQQQANGEKKDAPAVPSAPPSYEEATSGEGLKA. The next 3 membrane-spanning stretches (helical) occupy residues 106 to 126, 138 to 158, and 165 to 185; these read VYTILLVQLLVTLAVVALFTF, PGWYWASYAVFFATYLTLACC, and FPWNLILLTIFTLSMAYLTGM. N191 is a glycosylation site (N-linked (GlcNAc...) asparagine). The next 4 helical transmembrane spans lie at 194-214, 225-245, 251-271, and 290-310; these read SVLLCLGITALVCLSVTIFSF, GVLFVLLMTLFFSGLLLAILL, PWLHAVYAVLGAGVFTLFLAF, and IFGALNIYLDIIYIFTFFLQL.

It belongs to the BI1 family. LFG subfamily. In terms of assembly, interacts with FAS/TNFRSF6 and BAX. As to expression, expressed at high levels on dendrites and to a lesser extent on the soma and axons of neurons in various regions of brain.

It localises to the cell membrane. It is found in the membrane raft. The protein localises to the postsynaptic cell membrane. Antiapoptotic protein which protects cells uniquely from Fas-induced apoptosis. Regulates Fas-mediated apoptosis in neurons by interfering with caspase-8 activation. Plays a role in cerebellar development by affecting cerebellar size, internal granular layer (IGL) thickness, and Purkinje cell (PC) development. The protein is Protein lifeguard 2 (Faim2) of Rattus norvegicus (Rat).